A 93-amino-acid chain; its full sequence is Em protein H5 (93 aa).

A disordered region spans residues 1–93; the sequence is MASGQQERSE…IDESKFKTKS (93 aa). Composition is skewed to basic and acidic residues over residues 7-19, 32-62, and 73-93; these read ERSELDRMAREGE, EAQEHLADGRSRGGETRKEQLGEEGYREMGR, and GGERAAREGIEIDESKFKTKS.

Belongs to the small hydrophilic plant seed protein family.

Its function is as follows. It is thought to provide protection for the cytoplasm during the desiccation stage of embryo development. In Triticum aestivum (Wheat), this protein is Em protein H5 (EMH5).